Consider the following 393-residue polypeptide: MKRTRDEVDATLQIAKLNAAELLPAVHCLGFGPGASGAAAGDFCLLELEPTLCQQLEDGHSLVIRGDKDEQAVLCSKDKTYDLKIADTSNMLLFIPGCKTPDQLKKEDSHCNIIHTEIFGFSNNYWELRRRRPKLKKLKKLLMENPYEGPDSQKEKDSNSSKYTTEDLLDQIQASEEEIMTQLQVLNACKIGGYWRILEFDYEMKLLNHVTQLVDSESWSFGKVPLNTCLQELGPLEPEEMIEHCLKCYGKKYVDEGEVYFELDADKICRAAARMLLQNAVKFNLAEFQEVWQQSVPEGMVTSLDQLKGLALVDRHSRPEIIFLLKVDDLPEDNQERFNSLFSLREKWTEEDIAPYIQDLCGEKQTIGALLTKYSHSSMQNGVKVYNSRRPIS.

The protein belongs to the DCC1 family. As to quaternary structure, component of the CTF18-RFC complex which consists of CTF8, CTF18, DSCC1 and the RFC complex. Interacts with CTF8 and CTF18. Interacts with DDX11.

It localises to the nucleus. Functionally, loads PCNA onto primed templates regulating velocity, spacing and restart activity of replication forks. May couple DNA replication to sister chromatid cohesion through regulation of the acetylation of the cohesin subunit SMC3. This chain is Sister chromatid cohesion protein DCC1 (DSCC1), found in Homo sapiens (Human).